We begin with the raw amino-acid sequence, 115 residues long: Phosphoribosyl-ATP pyrophosphatase (115 aa).

The protein belongs to the PRA-PH family.

It is found in the cytoplasm. It carries out the reaction 1-(5-phospho-beta-D-ribosyl)-ATP + H2O = 1-(5-phospho-beta-D-ribosyl)-5'-AMP + diphosphate + H(+). The protein operates within amino-acid biosynthesis; L-histidine biosynthesis; L-histidine from 5-phospho-alpha-D-ribose 1-diphosphate: step 2/9. The protein is Phosphoribosyl-ATP pyrophosphatase of Bordetella bronchiseptica (strain ATCC BAA-588 / NCTC 13252 / RB50) (Alcaligenes bronchisepticus).